Here is a 1250-residue protein sequence, read N- to C-terminus: SRC kinase signaling inhibitor 1 (1250 aa).

A compositionally biased stretch (basic and acidic residues) spans 19-45 (AEGRARSPREEVGPRDPGGRGEPDPER). The disordered stretch occupies residues 19-78 (AEGRARSPREEVGPRDPGGRGEPDPERSSPPMLSADDAEYPREYRTLGGGGGGGSGGRRF). Phosphoserine is present on residues Ser47 and Ser52. Residues 65–75 (LGGGGGGGSGG) are compositionally biased toward gly residues. A Phosphoserine modification is found at Ser79. The residue at position 86 (Thr86) is a Phosphothreonine. A phosphoserine mark is found at Ser87, Ser98, Ser211, Ser233, Ser237, Ser247, and Ser293. Tyr309 carries the phosphotyrosine modification. The disordered stretch occupies residues 352 to 448 (ASRESSPTRR…RRDVKPDEDL (97 aa)). Residues 354–364 (RESSPTRRLNN) show a composition bias toward polar residues. Residues 365-374 (LSPASHLASS) are compositionally biased toward low complexity. Residues Ser366, Ser375, and Ser392 each carry the phosphoserine modification. The span at 381–399 (PSGLPSGLPSGSPSRSRLS) shows a compositional bias: low complexity. Omega-N-methylarginine is present on residues Arg397 and Arg404. Phosphoserine occurs at positions 411, 430, and 432. The segment covering 437–448 (LERRDVKPDEDL) has biased composition (basic and acidic residues). Tyr464 is subject to Phosphotyrosine. Residues 538 to 710 (PSSPQKLADV…ASSTPAGQPT (173 aa)) are disordered. Residues 552-563 (GGPPPPHSPYSG) are compositionally biased toward pro residues. Phosphoserine is present on residues Ser559, Ser562, and Ser566. Residue Arg567 is modified to Omega-N-methylarginine. Phosphoserine occurs at positions 569, 579, 581, 583, and 588. Residues 590–607 (GGKARSTGSASTAGAPPS) show a composition bias toward low complexity. Residues 628 to 640 (KDTETRERMEAME) show a composition bias toward basic and acidic residues. Phosphoserine is present on residues Ser664 and Ser688. Thr691 and Thr704 each carry phosphothreonine. Positions 701-710 (ASSTPAGQPT) are enriched in low complexity. Coiled-coil stretches lie at residues 712–753 (VSRL…RALL) and 793–813 (EELI…IQRD). The segment at 714-764 (RLQMQLHLRGLQNSASDLRGQLQQLRNVQLQNQESVRALLKPTEADVSMRV) is interaction with SNAP25. Phosphoserine occurs at positions 911 and 933. Disordered regions lie at residues 924-982 (GLDF…ERDW) and 1016-1094 (DCAS…TGEV). Thr951 is subject to Phosphothreonine. Ser1054 bears the Phosphoserine mark. A compositionally biased stretch (pro residues) spans 1069-1078 (KSPPPPPPRR). Phosphoserine is present on residues Ser1110 and Ser1127. Residues 1155–1250 (ELESGGSSVP…FGARNSSISF (96 aa)) form a disordered region. The span at 1217–1250 (PNETSSPGSEKPSGSRTSIPVLTSFGARNSSISF) shows a compositional bias: polar residues.

It belongs to the SRCIN1 family. As to quaternary structure, interacts with the N-terminal coiled-coil region of SNAP25. Interacts with BCAR1/p130Cas and SRC through its C-terminal domain. Interacts with CSK, CTTN, SORBS3/vinexin, SYP and MAPRE3/EB3. Tyrosine-phosphorylated in response to EGF and to cell adhesion to integrin ligands. Expressed predominantly in central nervous system with high levels detected in cortex, cerebellum, midbrain and spinal cord (at protein level). Also expressed in testis and epithelial-rich tissues such as mammary gland, lung and kidney.

It is found in the cytoplasm. The protein resides in the cytoskeleton. It localises to the cell projection. Its subcellular location is the axon. The protein localises to the dendrite. It is found in the presynapse. The protein resides in the postsynapse. It localises to the postsynaptic density. Its function is as follows. Acts as a negative regulator of SRC by activating CSK which inhibits SRC activity and downstream signaling, leading to impaired cell spreading and migration. Regulates dendritic spine morphology. Involved in calcium-dependent exocytosis. May play a role in neurotransmitter release or synapse maintenance. In Mus musculus (Mouse), this protein is SRC kinase signaling inhibitor 1 (Srcin1).